The following is a 387-amino-acid chain: Ferrochelatase (387 aa).

Fe cation is bound by residues H196 and E277.

Belongs to the ferrochelatase family.

Its subcellular location is the cytoplasm. It carries out the reaction heme b + 2 H(+) = protoporphyrin IX + Fe(2+). The protein operates within porphyrin-containing compound metabolism; protoheme biosynthesis; protoheme from protoporphyrin-IX: step 1/1. In terms of biological role, catalyzes the ferrous insertion into protoporphyrin IX. The protein is Ferrochelatase of Cyanothece sp. (strain PCC 7425 / ATCC 29141).